The chain runs to 177 residues: Nucleoside triphosphate/diphosphate phosphatase (177 aa).

Arginine 23 functions as the Proton donor in the catalytic mechanism. Positions 87, 103, 105, 107, 120, and 123 each coordinate Mg(2+).

This sequence belongs to the Ntdp family. Requires Mg(2+) as cofactor.

It carries out the reaction a ribonucleoside 5'-triphosphate + H2O = a ribonucleoside 5'-diphosphate + phosphate + H(+). It catalyses the reaction a ribonucleoside 5'-diphosphate + H2O = a ribonucleoside 5'-phosphate + phosphate + H(+). Has nucleoside phosphatase activity towards nucleoside triphosphates and nucleoside diphosphates. The protein is Nucleoside triphosphate/diphosphate phosphatase of Streptococcus pneumoniae (strain ATCC 700669 / Spain 23F-1).